We begin with the raw amino-acid sequence, 288 residues long: Heme oxygenase 1 (288 aa).

Residues 1–265 lie on the Cytoplasmic side of the membrane; it reads MERPQPDSMP…KPPLNTRSQA (265 aa). Lys18, His25, Tyr134, and Arg183 together coordinate heme b. The interval 223–260 is disordered; it reads HDTKDQSPSRAPGLRQRASNKVQDSAPVETPRGKPPLN. A Phosphoserine modification is found at Ser229. Residues 266–288 form a helical; Anchor for type IV membrane protein membrane-spanning segment; that stretch reads PLLRWVLTLSFLVATVAVGLYAM.

This sequence belongs to the heme oxygenase family. In terms of assembly, (Microbial infection) Interacts with SARS-CoV-2 ORF3A protein; the interaction promotes ORF3A-induced autophagy but is unlikely to be involved in ORF3A-mediated induction of reticulophagy. As to quaternary structure, homodimer and higher order homooligomer. Oligomerization is crucial for its stability and function in the endoplasmic reticulum. Interacts with FLVCR2; this interaction is potentiated in the presence of heme. Post-translationally, a soluble form arises by proteolytic removal of the membrane anchor. As to expression, expressed at higher levels in renal cancer tissue than in normal tissue (at protein level).

Its subcellular location is the endoplasmic reticulum membrane. It catalyses the reaction heme b + 3 reduced [NADPH--hemoprotein reductase] + 3 O2 = biliverdin IXalpha + CO + Fe(2+) + 3 oxidized [NADPH--hemoprotein reductase] + 3 H2O + H(+). In terms of biological role, catalyzes the oxidative cleavage of heme at the alpha-methene bridge carbon, released as carbon monoxide (CO), to generate biliverdin IXalpha, while releasing the central heme iron chelate as ferrous iron. Affords protection against programmed cell death and this cytoprotective effect relies on its ability to catabolize free heme and prevent it from sensitizing cells to undergo apoptosis. (Microbial infection) During SARS-COV-2 infection, promotes SARS-CoV-2 ORF3A-mediated autophagy but is unlikely to be required for ORF3A-mediated induction of reticulophagy. Functionally, catalyzes the oxidative cleavage of heme at the alpha-methene bridge carbon, released as carbon monoxide (CO), to generate biliverdin IXalpha, while releasing the central heme iron chelate as ferrous iron. This Homo sapiens (Human) protein is Heme oxygenase 1 (HMOX1).